Reading from the N-terminus, the 310-residue chain is Glutamyl-Q tRNA(Asp) synthetase (310 aa).

Residues 24-28 and Glu60 contribute to the L-glutamate site; that span reads RFAPS. The short motif at 27–37 is the 'HIGH' region element; that stretch reads PSPSGPLHFGS. Residues Cys116, Cys118, Tyr130, and Cys134 each contribute to the Zn(2+) site. Residues Tyr187 and Arg205 each contribute to the L-glutamate site. Residues 243-247 carry the 'KMSKS' region motif; that stretch reads KLSKQ. Position 246 (Lys246) interacts with ATP.

It belongs to the class-I aminoacyl-tRNA synthetase family. GluQ subfamily. The cofactor is Zn(2+).

In terms of biological role, catalyzes the tRNA-independent activation of glutamate in presence of ATP and the subsequent transfer of glutamate onto a tRNA(Asp). Glutamate is transferred on the 2-amino-5-(4,5-dihydroxy-2-cyclopenten-1-yl) moiety of the queuosine in the wobble position of the QUC anticodon. The protein is Glutamyl-Q tRNA(Asp) synthetase of Photobacterium profundum (strain SS9).